The following is a 362-amino-acid chain: uncharacterized protein (362 aa).

7 helical membrane passes run glycine 32 to valine 52, phenylalanine 75 to valine 95, valine 106 to valine 126, alanine 148 to alanine 168, glycine 176 to valine 196, valine 287 to methionine 307, and valine 329 to phenylalanine 349.

The protein belongs to the peptidase S58 family.

It is found in the cell membrane. Aminopeptidase. This is an uncharacterized protein from Mycobacterium leprae (strain TN).